A 139-amino-acid chain; its full sequence is Crossover junction endodeoxyribonuclease Hje (139 aa).

Mg(2+) is bound by residues glutamate 10, aspartate 39, and glutamate 52.

It belongs to the Holliday junction resolvase Hjc family. Hje subfamily. As to quaternary structure, homodimer. Mg(2+) is required as a cofactor.

It carries out the reaction Endonucleolytic cleavage at a junction such as a reciprocal single-stranded crossover between two homologous DNA duplexes (Holliday junction).. In terms of biological role, a structure-specific endonuclease that resolves Holliday junction (HJ) intermediates during genetic recombination. Acts only on 4-way DNA junctions in a sequence non-specific manner; introduces paired nicks in opposing strands 2 bases 3' of the point of strand exchange only on continuous strands of 4-way junction DNA. Cleaves both mobile and immobile junctions. Its function is as follows. Redundant function with Holliday junction resolvase Hjc. The chain is Crossover junction endodeoxyribonuclease Hje from Sulfolobus acidocaldarius (strain ATCC 33909 / DSM 639 / JCM 8929 / NBRC 15157 / NCIMB 11770).